The chain runs to 59 residues: Ribosome biogenesis protein Nop10 (59 aa).

This sequence belongs to the NOP10 family.

Involved in ribosome biogenesis; more specifically in 18S rRNA pseudouridylation and in cleavage of pre-rRNA. This is Ribosome biogenesis protein Nop10 from Thermococcus kodakarensis (strain ATCC BAA-918 / JCM 12380 / KOD1) (Pyrococcus kodakaraensis (strain KOD1)).